We begin with the raw amino-acid sequence, 103 residues long: Putative glutaredoxin-C12 (103 aa).

The 102-residue stretch at 1-102 folds into the Glutaredoxin domain; it reads MERVRDLASE…QMLKASNAIW (102 aa). An intrachain disulfide couples C21 to C24.

The protein belongs to the glutaredoxin family. CC-type subfamily.

It localises to the cytoplasm. In terms of biological role, has a glutathione-disulfide oxidoreductase activity in the presence of NADPH and glutathione reductase. Reduces low molecular weight disulfides and proteins. The sequence is that of Putative glutaredoxin-C12 (GRXC12) from Arabidopsis thaliana (Mouse-ear cress).